Consider the following 568-residue polypeptide: Urocanate hydratase (568 aa).

Residues 58-59, glutamine 136, 182-184, glutamate 202, arginine 207, 248-249, 269-273, 279-280, and tyrosine 328 each bind NAD(+); these read GG, GMG, NA, QTSAH, and YL. Cysteine 416 is a catalytic residue. An NAD(+)-binding site is contributed by glycine 498.

Belongs to the urocanase family. Requires NAD(+) as cofactor.

The protein localises to the cytoplasm. The enzyme catalyses 4-imidazolone-5-propanoate = trans-urocanate + H2O. The protein operates within amino-acid degradation; L-histidine degradation into L-glutamate; N-formimidoyl-L-glutamate from L-histidine: step 2/3. Its function is as follows. Catalyzes the conversion of urocanate to 4-imidazolone-5-propionate. The chain is Urocanate hydratase from Photobacterium profundum (strain SS9).